The chain runs to 473 residues: Ribulose bisphosphate carboxylase large chain 2 (473 aa).

Substrate-binding residues include Asn116 and Thr166. Lys168 functions as the Proton acceptor in the catalytic mechanism. Lys170 contributes to the substrate binding site. Mg(2+)-binding residues include Lys194, Asp196, and Glu197. Position 194 is an N6-carboxylysine (Lys194). The active-site Proton acceptor is His287. Residues Arg288, His320, and Ser372 each coordinate substrate.

It belongs to the RuBisCO large chain family. Type I subfamily. As to quaternary structure, heterohexadecamer of 8 large chains and 8 small chains. The cofactor is Mg(2+).

The enzyme catalyses 2 (2R)-3-phosphoglycerate + 2 H(+) = D-ribulose 1,5-bisphosphate + CO2 + H2O. The catalysed reaction is D-ribulose 1,5-bisphosphate + O2 = 2-phosphoglycolate + (2R)-3-phosphoglycerate + 2 H(+). RuBisCO catalyzes two reactions: the carboxylation of D-ribulose 1,5-bisphosphate, the primary event in carbon dioxide fixation, as well as the oxidative fragmentation of the pentose substrate. Both reactions occur simultaneously and in competition at the same active site. This Acidithiobacillus ferrooxidans (strain ATCC 23270 / DSM 14882 / CIP 104768 / NCIMB 8455) (Ferrobacillus ferrooxidans (strain ATCC 23270)) protein is Ribulose bisphosphate carboxylase large chain 2.